Reading from the N-terminus, the 308-residue chain is Ornithine carbamoyltransferase (308 aa).

Residues 55–58 (STRT), Gln82, Arg106, and 133–136 (HPCQ) contribute to the carbamoyl phosphate site. L-ornithine contacts are provided by residues Asn164, Asp227, and 231 to 232 (SM). Carbamoyl phosphate-binding positions include 267–268 (CL) and Arg295.

It belongs to the aspartate/ornithine carbamoyltransferase superfamily. OTCase family.

The protein resides in the cytoplasm. It catalyses the reaction carbamoyl phosphate + L-ornithine = L-citrulline + phosphate + H(+). The protein operates within amino-acid biosynthesis; L-arginine biosynthesis; L-arginine from L-ornithine and carbamoyl phosphate: step 1/3. In terms of biological role, reversibly catalyzes the transfer of the carbamoyl group from carbamoyl phosphate (CP) to the N(epsilon) atom of ornithine (ORN) to produce L-citrulline. The protein is Ornithine carbamoyltransferase of Prochlorococcus marinus subsp. pastoris (strain CCMP1986 / NIES-2087 / MED4).